Consider the following 486-residue polypeptide: ATP synthase subunit beta (486 aa).

Gly-164–Thr-171 is an ATP binding site.

Belongs to the ATPase alpha/beta chains family. In terms of assembly, F-type ATPases have 2 components, CF(1) - the catalytic core - and CF(0) - the membrane proton channel. CF(1) has five subunits: alpha(3), beta(3), gamma(1), delta(1), epsilon(1). CF(0) has four main subunits: a(1), b(1), b'(1) and c(9-12).

It localises to the cellular thylakoid membrane. The catalysed reaction is ATP + H2O + 4 H(+)(in) = ADP + phosphate + 5 H(+)(out). In terms of biological role, produces ATP from ADP in the presence of a proton gradient across the membrane. The catalytic sites are hosted primarily by the beta subunits. This chain is ATP synthase subunit beta, found in Prochlorococcus marinus (strain AS9601).